A 322-amino-acid polypeptide reads, in one-letter code: MLQGHERSITQIKYNREGDLLFSCSKDQKPNVWYSLNGERLGTYDGHQGAVWCLDVDWESRKLITGAGDMTTKIWDVEYGTVIASIPTKSSVRTSNFSFSGNQAAYSTDKAMGQSCELFLIDVRNADSSLSEQEPTLRIPMTESKITSMLWGPLDETIITGHDNGNIAIWDIRKGQKVVDSGTDHSAGINDMQLSKDGTMFVTASKDTTAKLFDSESLMCLKSYKTERPVNSAAISPILDHVVLGGGQDAMEVTTTSTKAGKFDSRFFHLIYEEEFARLKGHFGPINSLAFHPDGKSYASGGEDGFVRVQTFDSTYFENIFE.

5 WD repeats span residues 4 to 43, 46 to 85, 141 to 180, 184 to 223, and 281 to 322; these read GHERSITQIKYNREGDLLFSCSKDQKPNVWYSLNGERLGT, GHQGAVWCLDVDWESRKLITGAGDMTTKIWDVEYGTVIAS, MTESKITSMLWGPLDETIITGHDNGNIAIWDIRKGQKVVD, DHSAGINDMQLSKDGTMFVTASKDTTAKLFDSESLMCLKS, and GHFG…NIFE.

It belongs to the eIF-3 subunit I family. In terms of assembly, component of the eukaryotic translation initiation factor 3 (eIF-3) complex. The eIF-3 complex interacts with pix.

Its subcellular location is the cytoplasm. Component of the eukaryotic translation initiation factor 3 (eIF-3) complex, which is involved in protein synthesis of a specialized repertoire of mRNAs and, together with other initiation factors, stimulates binding of mRNA and methionyl-tRNAi to the 40S ribosome. The eIF-3 complex specifically targets and initiates translation of a subset of mRNAs involved in cell proliferation. This Drosophila yakuba (Fruit fly) protein is Eukaryotic translation initiation factor 3 subunit I.